Consider the following 992-residue polypeptide: Disks large-associated protein 1 (992 aa).

Disordered stretches follow at residues 154–209 (SLEG…SWWS) and 355–375 (KAMG…SPKV). Position 169 is a phosphoserine (serine 169). A compositionally biased stretch (low complexity) spans 195 to 209 (SNASNASPTSPSWWS). 13 positions are modified to phosphoserine: serine 362, serine 365, serine 368, serine 372, serine 389, serine 418, serine 421, serine 425, serine 428, serine 437, serine 509, serine 516, and serine 578. Threonine 579 carries the phosphothreonine modification. Residues serine 581 and serine 605 each carry the phosphoserine modification. Threonine 606 is subject to Phosphothreonine. Phosphoserine occurs at positions 608 and 611. 2 interaction with DYL2 regions span residues 665–676 (LSIGIQVDDAEE) and 687–698 (SKFQSVGVQVEE). Positions 914–980 (WKQMDPLDKK…QNSATESAES (67 aa)) are disordered. Basic and acidic residues-rich tracts occupy residues 918–927 (DPLDKKERRA) and 943–958 (IRER…EARK). Serine 947 bears the Phosphoserine mark. The span at 969-978 (VRQNSATESA) shows a compositional bias: polar residues. The PDZ-binding motif lies at 990–992 (TRL).

Belongs to the SAPAP family. Interacts with guanylate kinase-like domain of DLG1, DLG2, DLG3, DLG4 and AIP1. Interacts with the PDZ domain of SHANK1, SHANK2 and SHANK3. Found in a complex with DLG4 and SHANK1, SHANK2 or SHANK3. Found in a complex with DLG4 and BEGAIN. Interacts with DYL2 and LRFN1. Interacts with MPP2 (via the SH3-Guanylate kinase-like sub-module). Post-translationally, ubiquitinated by TRIM3; leading to proteasomal degradation. In terms of tissue distribution, expressed in brain and testis.

Its subcellular location is the cell membrane. The protein localises to the postsynaptic density. The protein resides in the synapse. Part of the postsynaptic scaffold in neuronal cells. The polypeptide is Disks large-associated protein 1 (Rattus norvegicus (Rat)).